Reading from the N-terminus, the 368-residue chain is Serine/threonine-protein phosphatase PP2A-like PPG1 (368 aa).

Mn(2+) is bound by residues Asp-50, His-52, Asp-78, and Asn-110. His-111 functions as the Proton donor in the catalytic mechanism. Mn(2+) is bound by residues His-161 and His-247.

This sequence belongs to the PPP phosphatase family. PP-2A subfamily. In terms of assembly, inactivated in a complex with phosphatase methylesterase PPE1 (PP2Ai). Interacts with phosphatase 2A activator RRD1, which can reactivate PP2Ai by dissociating the catalytic subunit from the complex. Interacts with TAP42. Mn(2+) is required as a cofactor. Reversibly methyl esterified on Leu-368 by leucine carboxyl methyltransferase 1 (PPM1) and protein phosphatase methylesterase 1 (PPE1). Carboxyl methylation influences the affinity of the catalytic subunit for the different regulatory subunits, thereby modulating the PP2A holoenzyme's substrate specificity, enzyme activity and cellular localization.

It catalyses the reaction O-phospho-L-seryl-[protein] + H2O = L-seryl-[protein] + phosphate. It carries out the reaction O-phospho-L-threonyl-[protein] + H2O = L-threonyl-[protein] + phosphate. Functionally, involved in glycogen accumulation. This chain is Serine/threonine-protein phosphatase PP2A-like PPG1 (PPG1), found in Saccharomyces cerevisiae (strain ATCC 204508 / S288c) (Baker's yeast).